The primary structure comprises 592 residues: Potassium-transporting ATPase potassium-binding subunit (592 aa).

Helical transmembrane passes span 7–27 (ILLGIFLVVLLLTVKPLGTYI), 60–80 (LKYACAILLFNVLGVLAVYAL), 132–152 (ALAVQNFFSAATGIVVVIALI), 175–195 (LHVLLPISIIYAVFLTGQGVI), 279–299 (LSNFIQMLSIFLIPAALCFTF), 310–330 (WAVLAAMTLMFVALAYTAMHF), 409–429 (GLYGMLVFAIMAVFIAGLMIG), 449–469 (IAILVTPLLVLVGTAIAVMLA), 513–533 (VMLGIAMWFGRFGVIVPVLAI), and 556–576 (LFVTLLIGTVLLVGLLNYVPA).

The protein belongs to the KdpA family. In terms of assembly, the system is composed of three essential subunits: KdpA, KdpB and KdpC.

Its subcellular location is the cell inner membrane. Functionally, part of the high-affinity ATP-driven potassium transport (or Kdp) system, which catalyzes the hydrolysis of ATP coupled with the electrogenic transport of potassium into the cytoplasm. This subunit binds the periplasmic potassium ions and delivers the ions to the membrane domain of KdpB through an intramembrane tunnel. This is Potassium-transporting ATPase potassium-binding subunit from Dechloromonas aromatica (strain RCB).